A 113-amino-acid polypeptide reads, in one-letter code: Putative pterin-4-alpha-carbinolamine dehydratase (113 aa).

This sequence belongs to the pterin-4-alpha-carbinolamine dehydratase family.

It catalyses the reaction (4aS,6R)-4a-hydroxy-L-erythro-5,6,7,8-tetrahydrobiopterin = (6R)-L-erythro-6,7-dihydrobiopterin + H2O. This Nitrosococcus oceani (strain ATCC 19707 / BCRC 17464 / JCM 30415 / NCIMB 11848 / C-107) protein is Putative pterin-4-alpha-carbinolamine dehydratase.